Reading from the N-terminus, the 246-residue chain is Sulfate transporter CysZ (246 aa).

A run of 4 helical transmembrane segments spans residues 24-44, 69-89, 148-168, and 214-234; these read LFVL…IGFA, IVWP…FTMV, LLVL…WILF, and LLIP…ATLF.

Belongs to the CysZ family.

It localises to the cell inner membrane. Its function is as follows. High affinity, high specificity proton-dependent sulfate transporter, which mediates sulfate uptake. Provides the sulfur source for the cysteine synthesis pathway. The chain is Sulfate transporter CysZ from Pseudomonas aeruginosa (strain LESB58).